The following is a 37-amino-acid chain: Large ribosomal subunit protein bL36c (37 aa).

Belongs to the bacterial ribosomal protein bL36 family.

The protein resides in the plastid. It localises to the chloroplast. In Gnetum parvifolium (Small-leaved jointfir), this protein is Large ribosomal subunit protein bL36c.